The primary structure comprises 274 residues: MAIHLYKTSTPSTRNGAVDSQVKSNPRNHLIYGQHRCGKGRNARGIITAGHRGGGHKRLYRQIDFRRNEKNIYGRIVTIEYDPNRNASICLIHYGDGEKKYILHPRGAIIGDTIVSGTEVPIKMGNALPLTDMPLGTAIHNIEITLGKGGQLARAAGAVAKLIAKEGKSATLKLPSGEVRLISKNCSATVGQVGNVGVNQKNLGRAGSKCWLGKRPIVRGVVMNPVDHPHGGGEGRAPIGRKKPATPWGFPALGRRSRKRKKYSDNLILRRRTK.

2 disordered regions span residues 1–22 and 223–274; these read MAIH…DSQV and MNPV…RRTK.

Belongs to the universal ribosomal protein uL2 family. As to quaternary structure, part of the 50S ribosomal subunit.

Its subcellular location is the plastid. The protein localises to the chloroplast. The chain is Large ribosomal subunit protein uL2cz/uL2cy (rpl2-A) from Phaseolus vulgaris (Kidney bean).